Reading from the N-terminus, the 88-residue chain is Cell division topological specificity factor (88 aa).

This sequence belongs to the MinE family.

Its function is as follows. Prevents the cell division inhibition by proteins MinC and MinD at internal division sites while permitting inhibition at polar sites. This ensures cell division at the proper site by restricting the formation of a division septum at the midpoint of the long axis of the cell. In Paracidovorax citrulli (strain AAC00-1) (Acidovorax citrulli), this protein is Cell division topological specificity factor.